The following is a 570-amino-acid chain: MFS-type transporter pigP (570 aa).

Positions 14-54 (GMIKKAHPEQTPPDVSHEGDVATEKGDSDGVEQAAPTGPTD) are disordered. Basic and acidic residues predominate over residues 28-41 (VSHEGDVATEKGDS). 7 helical membrane passes run 65-85 (VMIM…TSII), 99-119 (LPDV…LVPL), 131-151 (WSFV…GVAT), 162-182 (VAGM…AGCV), 192-212 (GLLM…GGAF), 221-241 (CFYI…FVHI), and 263-283 (LVGF…LQYG). A glycan (N-linked (GlcNAc...) asparagine) is linked at asparagine 290. The next 7 helical transmembrane spans lie at 293–313 (VVIG…LWEW), 336–356 (VVYG…PIYF), 369–389 (VYIL…GALV), 392–412 (FGYY…GNGL), 425–445 (WIGY…MPII), 455–475 (LIPV…STFL), and 533–553 (VFYL…GMGW).

Belongs to the major facilitator superfamily. TCR/Tet family.

Its subcellular location is the cell membrane. Its function is as follows. MFS-type transporter; part of the gene cluster that mediates the biosynthesis of azaphilone pigments (MonAzPs), very widely used as food colorant. This chain is MFS-type transporter pigP, found in Monascus ruber (Mold).